Consider the following 361-residue polypeptide: Cilia- and flagella-associated protein 263 (361 aa).

The protein belongs to the CFAP263 family. Forms a complex with CFAP184; the interaction is required for functional activity in cilia.

The protein resides in the cell projection. The protein localises to the cilium. In complex with CFAP263, acts as a regulator of ciliary beating that connects radial spoke 3 (RS3) to the inner dynein arm (IDA) and the nexin-dynein regulatory complex (N-DRC). The complex is positioned parallel to N-DRC and forms a connection between the arch at the base of RS3, the IDA tail and N-DRC. This Tetrahymena thermophila (strain SB210) protein is Cilia- and flagella-associated protein 263 (CFAP263).